We begin with the raw amino-acid sequence, 98 residues long: Co-chaperonin GroES (98 aa).

This sequence belongs to the GroES chaperonin family. Heptamer of 7 subunits arranged in a ring. Interacts with the chaperonin GroEL.

The protein resides in the cytoplasm. Its function is as follows. Together with the chaperonin GroEL, plays an essential role in assisting protein folding. The GroEL-GroES system forms a nano-cage that allows encapsulation of the non-native substrate proteins and provides a physical environment optimized to promote and accelerate protein folding. GroES binds to the apical surface of the GroEL ring, thereby capping the opening of the GroEL channel. This chain is Co-chaperonin GroES, found in Kineococcus radiotolerans (strain ATCC BAA-149 / DSM 14245 / SRS30216).